The chain runs to 118 residues: Large ribosomal subunit protein uL18 (118 aa).

The protein belongs to the universal ribosomal protein uL18 family. As to quaternary structure, part of the 50S ribosomal subunit; part of the 5S rRNA/L5/L18/L25 subcomplex. Contacts the 5S and 23S rRNAs.

In terms of biological role, this is one of the proteins that bind and probably mediate the attachment of the 5S RNA into the large ribosomal subunit, where it forms part of the central protuberance. The sequence is that of Large ribosomal subunit protein uL18 from Helicobacter hepaticus (strain ATCC 51449 / 3B1).